Consider the following 286-residue polypeptide: MVKCLLLSFLIIAIFIGVPTAKGDVNFDLSTATAKTYTKFIEDFRATLPFSHKVYDIPLLYSTISDSRRFILLNLTSYAYETISVAIDVTNVYVVAYRTRDVSYFFKESPPEAYNILFKGTRKITLPYTGNYENLQTAAHKIRENIDLGLPALSSAITTLFYYNAQSAPSALLVLIQTTAEAARFKYIERHVAKYVATNFKPNLAIISLENQWSALSKQIFLAQNQGGKFRNPVDLIKPTGERFQVTNVDSDVVKGNIKLLLNSRASTADENFITTMTLLGESVVN.

Positions 1 to 23 (MVKCLLLSFLIIAIFIGVPTAKG) are cleaved as a signal peptide. The N-linked (GlcNAc...) asparagine glycan is linked to Asn-74. Active-site residues include Tyr-93, Tyr-132, Glu-181, and Arg-184.

This sequence belongs to the ribosome-inactivating protein family. Type 1 RIP subfamily. Bound to a branched hexasaccharide.

The catalysed reaction is Endohydrolysis of the N-glycosidic bond at one specific adenosine on the 28S rRNA.. Its function is as follows. Irreversibly relaxes supercoiled DNA and catalyzes double-stranded breakage. Also acts as a ribosome inactivating protein. The polypeptide is Ribosome-inactivating protein beta-momorcharin (MAP30) (Momordica charantia (Bitter gourd)).